Here is a 332-residue protein sequence, read N- to C-terminus: 2,3-diketo-L-gulonate reductase (332 aa).

H44 functions as the Proton donor in the catalytic mechanism. Residues 168–174, 224–225, and 304–306 contribute to the NAD(+) site; these read ITMVDMS, WK, and GHE.

This sequence belongs to the LDH2/MDH2 oxidoreductase family. DlgD subfamily. In terms of assembly, homodimer.

The protein localises to the cytoplasm. It catalyses the reaction 3-dehydro-L-gulonate + NAD(+) = 2,3-dioxo-L-gulonate + NADH + H(+). The enzyme catalyses 3-dehydro-L-gulonate + NADP(+) = 2,3-dioxo-L-gulonate + NADPH + H(+). Catalyzes the reduction of 2,3-diketo-L-gulonate in the presence of NADH, to form 3-keto-L-gulonate. The sequence is that of 2,3-diketo-L-gulonate reductase from Escherichia coli O81 (strain ED1a).